Here is a 712-residue protein sequence, read N- to C-terminus: Polyribonucleotide nucleotidyltransferase (712 aa).

2 residues coordinate Mg(2+): aspartate 493 and aspartate 499. Residues 560–619 (PRLLTFKVDPEDIGKIIGPGGKMVRSITEATGAKVDISDDGTITVSSSVGGQAEAARAMI) form the KH domain. The S1 motif domain occupies 629–697 (GQVYLGKVTR…HKGRVNLTRL (69 aa)).

Belongs to the polyribonucleotide nucleotidyltransferase family. Requires Mg(2+) as cofactor.

The protein localises to the cytoplasm. The catalysed reaction is RNA(n+1) + phosphate = RNA(n) + a ribonucleoside 5'-diphosphate. Its function is as follows. Involved in mRNA degradation. Catalyzes the phosphorolysis of single-stranded polyribonucleotides processively in the 3'- to 5'-direction. This is Polyribonucleotide nucleotidyltransferase from Synechococcus sp. (strain JA-3-3Ab) (Cyanobacteria bacterium Yellowstone A-Prime).